The primary structure comprises 293 residues: 3-methyl-2-oxobutanoate hydroxymethyltransferase (293 aa).

Positions 1 to 26 are disordered; the sequence is MTQAPVTAGTPYGTIPPASPLPQRRP. Mg(2+) is bound by residues D68 and D111. 3-methyl-2-oxobutanoate-binding positions include 68-69, D111, and K140; that span reads DS. Residue E142 coordinates Mg(2+). E209 acts as the Proton acceptor in catalysis.

Belongs to the PanB family. Homodecamer; pentamer of dimers. Mg(2+) is required as a cofactor.

It is found in the cytoplasm. It carries out the reaction 3-methyl-2-oxobutanoate + (6R)-5,10-methylene-5,6,7,8-tetrahydrofolate + H2O = 2-dehydropantoate + (6S)-5,6,7,8-tetrahydrofolate. It functions in the pathway cofactor biosynthesis; (R)-pantothenate biosynthesis; (R)-pantoate from 3-methyl-2-oxobutanoate: step 1/2. Functionally, catalyzes the reversible reaction in which hydroxymethyl group from 5,10-methylenetetrahydrofolate is transferred onto alpha-ketoisovalerate to form ketopantoate. The protein is 3-methyl-2-oxobutanoate hydroxymethyltransferase of Delftia acidovorans (strain DSM 14801 / SPH-1).